The following is a 226-amino-acid chain: Ribonuclease 3 (226 aa).

The RNase III domain maps to 6 to 128 (INKLQRKLGY…LIGGVFLDSD (123 aa)). Residue E41 participates in Mg(2+) binding. D45 is an active-site residue. D114 and E117 together coordinate Mg(2+). E117 is a catalytic residue. Residues 155 to 225 (DPKTRLQEYL…AEQALIKLGL (71 aa)) form the DRBM domain.

The protein belongs to the ribonuclease III family. Homodimer. Mg(2+) serves as cofactor.

It is found in the cytoplasm. It catalyses the reaction Endonucleolytic cleavage to 5'-phosphomonoester.. Digests double-stranded RNA. Involved in the processing of primary rRNA transcript to yield the immediate precursors to the large and small rRNAs (23S and 16S). Processes some mRNAs, and tRNAs when they are encoded in the rRNA operon. Processes pre-crRNA and tracrRNA of type II CRISPR loci if present in the organism. This is Ribonuclease 3 (rnc) from Pantoea ananatis (strain LMG 20103).